The chain runs to 404 residues: ATP phosphoribosyltransferase regulatory subunit (404 aa).

It belongs to the class-II aminoacyl-tRNA synthetase family. HisZ subfamily. Heteromultimer composed of HisG and HisZ subunits.

Its subcellular location is the cytoplasm. Its pathway is amino-acid biosynthesis; L-histidine biosynthesis; L-histidine from 5-phospho-alpha-D-ribose 1-diphosphate: step 1/9. Required for the first step of histidine biosynthesis. May allow the feedback regulation of ATP phosphoribosyltransferase activity by histidine. This Picosynechococcus sp. (strain ATCC 27264 / PCC 7002 / PR-6) (Agmenellum quadruplicatum) protein is ATP phosphoribosyltransferase regulatory subunit.